The chain runs to 476 residues: TOM1-like protein 1 (476 aa).

A VHS domain is found at 22-154 (ATFAGVQTED…DLVKKGVQFP (133 aa)). The tract at residues 155–179 (PSEAEAETARQETAQISSNPPTSVP) is disordered. Residues 170–179 (ISSNPPTSVP) are compositionally biased toward polar residues. Position 171 is a phosphoserine (Ser171). The region spanning 200 to 288 (EQIGKLHSEL…AILGYERFTR (89 aa)) is the GAT domain. Residues 298–314 (KNQKEATNTTSEPSAPS) are compositionally biased toward polar residues. The segment at 298 to 327 (KNQKEATNTTSEPSAPSQDLLDLSPSPRMP) is disordered. Phosphoserine is present on residues Ser314, Ser321, and Ser323. The segment at 392–395 (YDNF) is interaction with GRB2. An SH3-binding motif is present at residues 421–425 (LPPLP). Residues 442–445 (YEVM) are interaction with PIK3R1. A Phosphotyrosine modification is found at Tyr460. Positions 460–463 (YEEI) match the SH2-binding motif.

It belongs to the TOM1 family. Interacts with FYN, GRB2 and PIK3R1 when phosphorylated. Interacts with LYN. In terms of processing, phosphorylated on tyrosines by FYN and LYN.

Its subcellular location is the golgi apparatus. The protein localises to the golgi stack. The protein resides in the endosome membrane. It is found in the cytoplasm. It localises to the membrane. In terms of biological role, probable adapter protein involved in signaling pathways. Interacts with the SH2 and SH3 domains of various signaling proteins when it is phosphorylated. May promote FYN activation, possibly by disrupting intramolecular SH3-dependent interactions. In Homo sapiens (Human), this protein is TOM1-like protein 1 (TOM1L1).